The chain runs to 486 residues: Sensor protein PhoQ (486 aa).

Residues 1-16 (MKKLLHLFFPLSLRVR) are Cytoplasmic-facing. Residues 17–37 (FLLATAAVVLVLSLAYGMVAL) form a helical membrane-spanning segment. At 38–194 (IGYSVSFDKT…LKSSYMVWSW (157 aa)) the chain is on the periplasmic side. Residues D151 and D152 each contribute to the a divalent metal cation site. The helical transmembrane segment at 195–215 (FIYVLSANLLLVIPLLWVAAW) threads the bilayer. The 52-residue stretch at 215-266 (WWSLRPIEALAKEVRELEEHNRELLNPATTRELTSLVRNLNRLLKSERERYD) folds into the HAMP domain. Over 216–486 (WSLRPIEALA…GRQHSTPKDE (271 aa)) the chain is Cytoplasmic. The Histidine kinase domain maps to 274–480 (DLTHSLKTPL…RMEVIFGRQH (207 aa)). Position 277 is a phosphohistidine; by autocatalysis (H277). N385 serves as a coordination point for Mg(2+). ATP contacts are provided by residues 385–393 (NVLDNACKY), 415–420 (DDGPGI), and 434–446 (RVDTLRPGQGVGL). Residue Q442 participates in Mg(2+) binding.

In terms of assembly, homodimer.

It localises to the cell inner membrane. It carries out the reaction ATP + protein L-histidine = ADP + protein N-phospho-L-histidine.. Functionally, member of the two-component regulatory system PhoP/PhoQ involved in virulence, adaptation to low Mg(2+) environments and the control of acid resistance genes. In low periplasmic Mg(2+), PhoQ functions as a membrane-associated protein kinase that undergoes autophosphorylation and subsequently transfers the phosphate to PhoP, resulting in the expression of PhoP-activated genes (PAG) and repression of PhoP-repressed genes (PRG). In high periplasmic Mg(2+), acts as a protein phosphatase that dephosphorylates phospho-PhoP, which results in the repression of PG and may lead to expression of some PRG. This chain is Sensor protein PhoQ (phoQ), found in Escherichia coli O157:H7.